Here is a 683-residue protein sequence, read N- to C-terminus: Methionine--tRNA ligase (683 aa).

The short motif at 14-24 is the 'HIGH' region element; it reads PYANGSIHLGH. C145, C148, C158, and C161 together coordinate Zn(2+). The short motif at 331–335 is the 'KMSKS' region element; that stretch reads KMSKS. Residue K334 coordinates ATP. The disordered stretch occupies residues 545–572; sequence ASKEDLTASQTDTGAAAPAGNGELAKDP. In terms of domain architecture, tRNA-binding spans 581 to 683; the sequence is TFAAVDLRVA…SGAKPGQRIK (103 aa).

Belongs to the class-I aminoacyl-tRNA synthetase family. MetG type 1 subfamily. As to quaternary structure, homodimer. It depends on Zn(2+) as a cofactor.

It localises to the cytoplasm. It catalyses the reaction tRNA(Met) + L-methionine + ATP = L-methionyl-tRNA(Met) + AMP + diphosphate. Is required not only for elongation of protein synthesis but also for the initiation of all mRNA translation through initiator tRNA(fMet) aminoacylation. In Pseudomonas fluorescens (strain Pf0-1), this protein is Methionine--tRNA ligase.